A 317-amino-acid polypeptide reads, in one-letter code: Melanocyte-stimulating hormone receptor (317 aa).

At 1–37 (MPVQGSQRRLLGSLNSTPTATPKLGLAANQTGAQCLE) the chain is on the extracellular side. N-linked (GlcNAc...) asparagine glycosylation occurs at N29. Residues 38–63 (VSIPDGLFLSLGLVSLVENVLVVAAI) traverse the membrane as a helical segment. The Cytoplasmic portion of the chain corresponds to 64-72 (ARNRNLHSP). The helical transmembrane segment at 73-93 (MYCFICCLALSDLLVSGSNML) threads the bilayer. Topologically, residues 94–118 (ETAVILLLEAGALAARAAVVQQLDN) are extracellular. The chain crosses the membrane as a helical span at residues 119-140 (VIDVITCSSMLSSLCFLGAIAM). Topologically, residues 141–163 (DRYISIFYALRYHSIVTLPRARG) are cytoplasmic. A helical membrane pass occupies residues 164–183 (VVAAIWVASILFSTLFIAYY). Over 184–191 (DHVAVLLC) the chain is Extracellular. Residues 192–211 (LVVFFLAMLVLMAVLYVHML) traverse the membrane as a helical segment. Residues 212-240 (ARACQHAQGIAQLHKRQRPAHQGVGLKGA) lie on the Cytoplasmic side of the membrane. The helical transmembrane segment at 241 to 266 (ATLTILLGIFFLCWGPFFLHLTLIVL) threads the bilayer. Residues 267-279 (CPQHPTCSCIFKN) are Extracellular-facing. The chain crosses the membrane as a helical span at residues 280 to 300 (FNLFLALIICNAIIDPLIYAF). Residues 301-317 (RSQELRRTLKKVLLCSW) lie on the Cytoplasmic side of the membrane. C315 carries the S-palmitoyl cysteine lipid modification.

This sequence belongs to the G-protein coupled receptor 1 family. Interacts with MGRN1, but does not undergo MGRN1-mediated ubiquitination; this interaction competes with GNAS-binding and thus inhibits agonist-induced cAMP production. Interacts with OPN3; the interaction results in a decrease in MC1R-mediated cAMP signaling and ultimately a decrease in melanin production in melanocytes.

Its subcellular location is the cell membrane. In terms of biological role, receptor for MSH (alpha, beta and gamma) and ACTH. The activity of this receptor is mediated by G proteins which activate adenylate cyclase. Mediates melanogenesis, the production of eumelanin (black/brown) and phaeomelanin (red/yellow), via regulation of cAMP signaling in melanocytes. The sequence is that of Melanocyte-stimulating hormone receptor (MC1R) from Presbytis comata (Grizzled leaf monkey).